A 449-amino-acid chain; its full sequence is MLRLWPGGAPGGLASILLRISLRLALWLPPLTLGSALAEGPGELYVPQHMPHHLVPAARSHAPLRAGHAGTTYIFGRDGGLIVYTWPPNDRPSTRADRLAVGFSTQQKDAVLVRVDSSSGLGDYLQLQIERGNIKVVFNVGTDDINIEETSKFVNDGKYHIVRFTRSGGNATLQVDDLPVIERYPSGNIDNERLAIARQRIPYRLGRVVDDWLLDKGRQLTIFNSQTTIKIGGWEKGSRPFQGQLSGLYYNGLKVLNMAAEGDPNVRVEGSARLVGDMPSSSITPQSSVSAAGNRSETSPSITDITTTTASNRQGKQTTTPQDDLLVASAECPSDDEDIDPCDPSSGGLAHPPLPEAKGYPSPEVIRESSSTTGMVVGIVAAAALCILILLYAMYKYRNRDEGSYHVDESRNYISNSATQPNGAAVKEKPIGVPKNKKDKKNKDKEYYV.

The N-terminal stretch at 1–38 (MLRLWPGGAPGGLASILLRISLRLALWLPPLTLGSALA) is a signal peptide. The Extracellular portion of the chain corresponds to 39–373 (EGPGELYVPQ…EVIRESSSTT (335 aa)). The Laminin G-like domain maps to 71–272 (TTYIFGRDGG…DPNVRVEGSA (202 aa)). Residues 276 to 366 (GDMPSSSITP…AKGYPSPEVI (91 aa)) are disordered. Positions 280 to 311 (SSSITPQSSVSAAGNRSETSPSITDITTTTAS) are enriched in low complexity. A compositionally biased stretch (polar residues) spans 312–322 (NRQGKQTTTPQ). The helical transmembrane segment at 374–394 (GMVVGIVAAAALCILILLYAM) threads the bilayer. At 395–449 (YKYRNRDEGSYHVDESRNYISNSATQPNGAAVKEKPIGVPKNKKDKKNKDKEYYV) the chain is on the cytoplasmic side. Residues 415 to 449 (SNSATQPNGAAVKEKPIGVPKNKKDKKNKDKEYYV) form a disordered region.

Belongs to the neurexin family.

The protein localises to the membrane. Its function is as follows. Neuronal cell surface protein that may be involved in cell recognition and cell adhesion. May play a role in formation or maintenance of synaptic junctions. In Danio rerio (Zebrafish), this protein is Neurexin-1a-beta (nrxn1a).